Here is a 229-residue protein sequence, read N- to C-terminus: Large ribosomal subunit protein uL1 (229 aa).

The protein belongs to the universal ribosomal protein uL1 family. As to quaternary structure, part of the 50S ribosomal subunit.

Functionally, binds directly to 23S rRNA. The L1 stalk is quite mobile in the ribosome, and is involved in E site tRNA release. Its function is as follows. Protein L1 is also a translational repressor protein, it controls the translation of the L11 operon by binding to its mRNA. This Phenylobacterium zucineum (strain HLK1) protein is Large ribosomal subunit protein uL1.